A 77-amino-acid chain; its full sequence is U8-lycotoxin-Ls1p (77 aa).

The N-terminal stretch at 1 to 20 is a signal peptide; it reads MKLMIFTGLVLFAIVSLIEA. A propeptide spanning residues 21-26 is cleaved from the precursor; it reads QAENEK.

Belongs to the neurotoxin 19 (CSTX) family. 08 (U8-Lctx) subfamily. Post-translationally, contains 4 disulfide bonds. In terms of tissue distribution, expressed by the venom gland.

The protein localises to the secreted. The protein is U8-lycotoxin-Ls1p of Lycosa singoriensis (Wolf spider).